We begin with the raw amino-acid sequence, 109 residues long: NADH-quinone oxidoreductase subunit K (109 aa).

Transmembrane regions (helical) follow at residues 12-32 (LNHYLILSSLVFTIGMLGLFM), 40-60 (ILMSIELMLLAVNINFVAFSV), and 72-92 (IIILTIAAAETSIGLAILLIY).

The protein belongs to the complex I subunit 4L family. In terms of assembly, NDH-1 is composed of 14 different subunits. Subunits NuoA, H, J, K, L, M, N constitute the membrane sector of the complex.

The protein localises to the cell inner membrane. The catalysed reaction is a quinone + NADH + 5 H(+)(in) = a quinol + NAD(+) + 4 H(+)(out). In terms of biological role, NDH-1 shuttles electrons from NADH, via FMN and iron-sulfur (Fe-S) centers, to quinones in the respiratory chain. The immediate electron acceptor for the enzyme in this species is believed to be ubiquinone. Couples the redox reaction to proton translocation (for every two electrons transferred, four hydrogen ions are translocated across the cytoplasmic membrane), and thus conserves the redox energy in a proton gradient. The polypeptide is NADH-quinone oxidoreductase subunit K (Rickettsia bellii (strain RML369-C)).